Here is a 212-residue protein sequence, read N- to C-terminus: Probable chemoreceptor glutamine deamidase CheD (212 aa).

Belongs to the CheD family.

It carries out the reaction L-glutaminyl-[protein] + H2O = L-glutamyl-[protein] + NH4(+). Its function is as follows. Probably deamidates glutamine residues to glutamate on methyl-accepting chemotaxis receptors (MCPs), playing an important role in chemotaxis. In Oleidesulfovibrio alaskensis (strain ATCC BAA-1058 / DSM 17464 / G20) (Desulfovibrio alaskensis), this protein is Probable chemoreceptor glutamine deamidase CheD.